A 1791-amino-acid polypeptide reads, in one-letter code: Brefeldin A-inhibited guanine nucleotide-exchange protein 2 (1791 aa).

M1 bears the N-acetylmethionine mark. Residues 2-224 (QESQTKSMFV…KPQSPVIQAT (223 aa)) are DCB; DCB:DCB domain and DCB:HUS domain interaction. Disordered stretches follow at residues 208 to 292 (LEKP…DNGA) and 311 to 350 (AAEKQGLPEPDQAPGVPECQECTVPPAVDENSQTNGIADD). A phosphoserine mark is found at S214, S218, and S227. The segment covering 214–225 (SKPQSPVIQATA) has biased composition (polar residues). A compositionally biased stretch (polar residues) spans 233–243 (LKQSQAQSKPT). T244 carries the phosphothreonine modification. A compositionally biased stretch (basic and acidic residues) spans 244–257 (TPEKTELPNGDHAR). S277 carries the post-translational modification Phosphoserine. Residues S355 and S356 each carry the phosphoserine modification. Residues 515–535 (ADAQCVVDIYVNYDCDLNAAN) form an HUS; DCB:HUS domain interaction region. At S621 the chain carries Phosphoserine. Phosphothreonine is present on T623. S624 carries the phosphoserine modification. T633 carries the phosphothreonine modification. Positions 661 to 792 (FNKKPKRGIQ…IIMLTTDLHS (132 aa)) constitute an SEC7 domain. A phosphoserine mark is found at S707, S1518, S1520, S1521, S1532, S1535, S1541, and S1788.

In terms of assembly, homodimer. Interacts with ARFGEF1/BIG1; both proteins are probably part of the same or very similar macromolecular complexes. Interacts with PRKAR1A, PRKAR2A, PRKAR1B, PRKAR2B, PPP1CC, PDE3A, TNFRSF1A, MYCBP and EXOC7. Interacts with GABRB1, GABRB2 and GABRB3. Post-translationally, in vitro phosphorylated by PKA reducing its GEF activity and dephosphorylated by phosphatase PP1. Expressed in brain (at protein level).

It is found in the cytoplasm. The protein localises to the membrane. The protein resides in the golgi apparatus. It localises to the perinuclear region. Its subcellular location is the trans-Golgi network. It is found in the endosome. The protein localises to the cytoskeleton. The protein resides in the microtubule organizing center. It localises to the centrosome. Its subcellular location is the cell projection. It is found in the dendrite. The protein localises to the cytoplasmic vesicle. The protein resides in the synapse. Inhibited by brefeldin A. Promotes guanine-nucleotide exchange on ARF1 and ARF3 and to a lower extent on ARF5 and ARF6. Promotes the activation of ARF1/ARF5/ARF6 through replacement of GDP with GTP. Involved in the regulation of Golgi vesicular transport. Required for the integrity of the endosomal compartment. Involved in trafficking from the trans-Golgi network (TGN) to endosomes and is required for membrane association of the AP-1 complex and GGA1. Seems to be involved in recycling of the transferrin receptor from recycling endosomes to the plasma membrane. Probably is involved in the exit of GABA(A) receptors from the endoplasmic reticulum. Involved in constitutive release of tumor necrosis factor receptor 1 via exosome-like vesicles; the function seems to involve PKA and specifically PRKAR2B. Proposed to act as A kinase-anchoring protein (AKAP) and may mediate crosstalk between Arf and PKA pathways. This Rattus norvegicus (Rat) protein is Brefeldin A-inhibited guanine nucleotide-exchange protein 2 (Arfgef2).